Consider the following 540-residue polypeptide: uncharacterized protein (540 aa).

A chloroplast-targeting transit peptide spans 1–58; sequence MAVSAFRGTRLPLFHHSQFPVARTVSGTSKKMIGARNFKGFVLTAQYSQTQDLFTSRL. A Protein kinase domain is found at 195–533; that stretch reads YVDPTPIASA…ISIASNKRTN (339 aa). ATP is bound by residues 201-209 and K224; that span reads IASASIAQV. Catalysis depends on D362, which acts as the Proton acceptor.

It belongs to the protein kinase superfamily. ADCK protein kinase family.

The protein resides in the plastid. Its subcellular location is the chloroplast. The protein localises to the plastoglobule. This is an uncharacterized protein from Arabidopsis thaliana (Mouse-ear cress).